Consider the following 474-residue polypeptide: PRAME family member 10 (474 aa).

The LRR 1; degenerate repeat unit spans residues arginine 97 to cysteine 124. The LRR 2; degenerate repeat unit spans residues histidine 179–tyrosine 203. The LRR 3; degenerate repeat unit spans residues proline 204 to glutamine 230. One copy of the LRR 4; degenerate repeat lies at methionine 231 to cysteine 265. LRR repeat units follow at residues leucine 266–leucine 291, lysine 292–lysine 323, glutamate 324–valine 342, alanine 348–histidine 375, and cysteine 376–histidine 400.

It belongs to the PRAME family.

This is PRAME family member 10 from Homo sapiens (Human).